Consider the following 527-residue polypeptide: Type II methyltransferase M.XamI (527 aa).

The protein belongs to the N(4)/N(6)-methyltransferase family.

It catalyses the reaction a 2'-deoxyadenosine in DNA + S-adenosyl-L-methionine = an N(6)-methyl-2'-deoxyadenosine in DNA + S-adenosyl-L-homocysteine + H(+). In terms of biological role, a gamma subtype methylase that recognizes the double-stranded sequence 5'-GTCGAC-3', possibly methylates A-5 on both strands, and protects the DNA from cleavage by the XamI endonuclease. The sequence is that of Type II methyltransferase M.XamI from Xanthomonas campestris pv. amaranthicola.